The chain runs to 1138 residues: Serine/threonine/tyrosine-interacting-like protein 2 (1138 aa).

The interval 1 to 20 (MATGGDAEEEQVVPNEEDEA) is disordered. The Tyrosine-protein phosphatase domain maps to 132–280 (NEVDEVWPNV…LRELNEKLME (149 aa)). A Phosphoserine modification is found at S291. 8 disordered regions span residues 309–336 (EEED…VTLI), 348–473 (EWRK…TWDM), 486–515 (ARKY…DDEE), 552–575 (KKDS…GEKN), 592–618 (QKKV…AKKR), 660–694 (AAPS…LPNL), 761–800 (SGCL…VRGT), and 850–1117 (FKKK…DEAI). Polar residues predominate over residues 316–331 (SHLSGSSLGKASQVSK). A Phosphoserine modification is found at S373. Residues 376-385 (DGDDCEDEDV) show a composition bias toward acidic residues. A compositionally biased stretch (basic and acidic residues) spans 386-409 (ERIIQEWQSRNERYQAKGREQWNR). T427 bears the Phosphothreonine mark. Phosphoserine occurs at positions 503 and 555. 2 stretches are compositionally biased toward basic and acidic residues: residues 552–567 (KKDS…HGTE) and 595–614 (VGSE…DTVL). The segment covering 672-687 (SVLSTQSHRSHASNMP) has biased composition (polar residues). Low complexity predominate over residues 773 to 788 (SSDVQSVLSSTSSLTS). The segment covering 858–871 (DEDMSVGDRDEDTD) has biased composition (acidic residues). Residue S862 is modified to Phosphoserine. A compositionally biased stretch (polar residues) spans 878–897 (RYSSRSNSQKPETDASSSLA). S929 is subject to Phosphoserine. The span at 936-947 (SGSSRGRYTRSS) shows a compositional bias: low complexity. Positions 965–977 (RSQEQDTSFHEAN) are enriched in basic and acidic residues. Residue S966 is modified to Phosphoserine. Positions 980-992 (TVRNTSRFSSSTT) are enriched in polar residues. Residue S1016 is modified to Phosphoserine. Basic and acidic residues-rich tracts occupy residues 1035–1059 (PEPR…KSDF) and 1074–1091 (RSEE…EEGR). Positions 1095 to 1106 (GRQSQYRRSTNQ) are enriched in polar residues. Residues 1107–1116 (QEEEEMDDEA) are compositionally biased toward acidic residues.

The protein belongs to the protein-tyrosine phosphatase family. Non-receptor class dual specificity subfamily.

It is found in the cytoplasm. It localises to the myofibril. Its subcellular location is the sarcomere. Functionally, may be required for myofiber maturation. The chain is Serine/threonine/tyrosine-interacting-like protein 2 (Styxl2) from Mus musculus (Mouse).